Here is a 232-residue protein sequence, read N- to C-terminus: Dysfunctional anti-sigma-K factor RskA (232 aa).

The Cytoplasmic portion of the chain corresponds to 1–90 (MTEHTDFELL…EVRRQSRWRT (90 aa)). Residues 91–111 (AAFASAAAIAVGLGAFDLGVL) traverse the membrane as a helical segment. Residues 112-232 (TRPSPPPTVA…GTILAELPLG (121 aa)) are Extracellular-facing.

Belongs to the anti-sigma-K factor family.

It is found in the cell membrane. In terms of biological role, an anti-sigma factor for extracytoplasmic function (ECF) sigma factor SigK. ECF sigma factors are held in an inactive form by an anti-sigma factor until released by regulated intramembrane proteolysis (RIP). However, in M.bovis this protein is probably dysfunctional, due to at least 1 of the 2 naturally occurring polymorphisms in its gene, when compared to M.tuberculosis. This leads to an increased expression of SigK-regulated genes, such as mpb70 and mpb83. RIP occurs when an extracytoplasmic signal triggers a concerted proteolytic cascade to transmit information and elicit cellular responses. The membrane-spanning regulatory substrate protein is first cut extracytoplasmically (site-1 protease, S1P), then within the membrane itself (site-2 protease, S2P, Rip1), while cytoplasmic proteases finish degrading the regulatory protein, liberating the sigma factor. The polypeptide is Dysfunctional anti-sigma-K factor RskA (rskA) (Mycobacterium bovis (strain ATCC BAA-935 / AF2122/97)).